A 377-amino-acid chain; its full sequence is Actin-related protein T2 (377 aa).

Belongs to the actin family.

It is found in the cytoplasm. The protein resides in the cytoskeleton. The sequence is that of Actin-related protein T2 (ACTRT2) from Bos taurus (Bovine).